We begin with the raw amino-acid sequence, 559 residues long: Tissue-type plasminogen activator (559 aa).

Positions 1-17 (MKRELLCVLLLCGLAFP) are cleaved as a signal peptide. A propeptide spanning residues 18–29 (LPDQGIHGRFRR) is cleaved from the precursor. A propeptide spans 30–32 (GAR) (removed by plasmin). Positions 36 to 78 (ATCRDEPTQTTYQQHQSWLRPMLRSSRVEYCRCNSGLVQCHSV) constitute a Fibronectin type-I domain. 17 disulfide bridges follow: cysteine 38–cysteine 68, cysteine 66–cysteine 75, cysteine 83–cysteine 94, cysteine 88–cysteine 105, cysteine 107–cysteine 116, cysteine 124–cysteine 205, cysteine 145–cysteine 187, cysteine 176–cysteine 200, cysteine 213–cysteine 294, cysteine 234–cysteine 276, cysteine 265–cysteine 289, cysteine 297–cysteine 428, cysteine 340–cysteine 356, cysteine 348–cysteine 417, cysteine 442–cysteine 516, cysteine 474–cysteine 490, and cysteine 506–cysteine 534. The interval 39-49 (RDEPTQTTYQQ) is important for binding to annexin A2. The EGF-like domain maps to 79 to 117 (PVRSCSEPRCFNGGTCQQALYFSDFVCQCPDGFVGKRCD). Kringle domains lie at 124–205 (CFEE…TPAC) and 213–294 (CYVG…MSPC). Residue asparagine 149 is glycosylated (N-linked (GlcNAc...) asparagine). The region spanning 309–558 (IKGGLYTDIT…YLDWIHDNMK (250 aa)) is the Peptidase S1 domain. Residues histidine 355 and aspartate 404 each act as charge relay system in the active site. Asparagine 481 is a glycosylation site (N-linked (GlcNAc...) asparagine). The active-site Charge relay system is serine 510.

It belongs to the peptidase S1 family. As to quaternary structure, heterodimer of chain A and chain B held by a disulfide bond. Binds to fibrin with high affinity. This interaction leads to an increase in the catalytic efficiency of the enzyme due to an increase in affinity for plasminogen. Similarly, binding to heparin increases the activation of plasminogen. Binds to annexin A2, cytokeratin-8, fibronectin and laminin. Binds to mannose receptor and the low-density lipoprotein receptor-related protein (LRP1); these proteins are involved in TPA clearance. Binds LRP1B; binding is followed by internalization and degradation. Forms heterodimer with SERPINA5. Interacts with SERPINE1. In complex with SERPINE1, interacts with SORL1. Post-translationally, the single chain, almost fully active enzyme, can be further processed into a two-chain fully active form by a cleavage after Arg-308 catalyzed by plasmin, tissue kallikrein or factor Xa.

It localises to the secreted. It is found in the extracellular space. The enzyme catalyses Specific cleavage of Arg-|-Val bond in plasminogen to form plasmin.. Its activity is regulated as follows. Inhibited by SERPINA5. Inhibited by SERPINE1. Converts the abundant, but inactive, zymogen plasminogen to plasmin by hydrolyzing a single Arg-Val bond in plasminogen. By controlling plasmin-mediated proteolysis, it plays an important role in tissue remodeling and degradation, in cell migration and many other physiopathological events. During oocyte activation, plays a role in cortical granule reaction in the zona reaction, which contributes to the block to polyspermy. This Mus musculus (Mouse) protein is Tissue-type plasminogen activator (Plat).